We begin with the raw amino-acid sequence, 472 residues long: NADH-quinone oxidoreductase subunit N (472 aa).

The next 14 membrane-spanning stretches (helical) occupy residues 5 to 25 (LLTTEMLTALLGIGLLAIGLL), 36 to 56 (AYAAVFGLLGILVVTFFQYGI), 77 to 97 (IFLVAAILVILSAIDYVDGLP), 103 to 123 (FYALLVFATLGMMVMASANDL), 126 to 146 (LYVGMELMTITFFILVAYILG), 158 to 178 (LLLGGASSAVLLYGLSLLYGL), 197 to 217 (LAIAVVTIIAGFGFKISAVPF), 229 to 249 (PTPVTGFLAAASKAAGFAVLV), 264 to 284 (WLTVIAVLAGVTMVIGNVVAI), 292 to 309 (MLAYSSVAQAGYLLVGLM), 319 to 339 (ILFYAMLYVVANMGAFAVATA), 363 to 383 (ASVMTISLLSLAGIPPLAGFV), 396 to 416 (GVLWPAFLGFVMSMVSVYYYL), and 441 to 461 (LTVIFSMVVTVILGIYPGPLA).

The protein belongs to the complex I subunit 2 family. As to quaternary structure, NDH-1 is composed of 14 different subunits. Subunits NuoA, H, J, K, L, M, N constitute the membrane sector of the complex.

It localises to the cell membrane. It catalyses the reaction a quinone + NADH + 5 H(+)(in) = a quinol + NAD(+) + 4 H(+)(out). Functionally, NDH-1 shuttles electrons from NADH, via FMN and iron-sulfur (Fe-S) centers, to quinones in the respiratory chain. The immediate electron acceptor for the enzyme in this species is believed to be a menaquinone. Couples the redox reaction to proton translocation (for every two electrons transferred, four hydrogen ions are translocated across the cytoplasmic membrane), and thus conserves the redox energy in a proton gradient. This chain is NADH-quinone oxidoreductase subunit N, found in Heliobacterium modesticaldum (strain ATCC 51547 / Ice1).